Consider the following 113-residue polypeptide: Large ribosomal subunit protein uL24 (113 aa).

The protein belongs to the universal ribosomal protein uL24 family. As to quaternary structure, part of the 50S ribosomal subunit.

In terms of biological role, one of two assembly initiator proteins, it binds directly to the 5'-end of the 23S rRNA, where it nucleates assembly of the 50S subunit. One of the proteins that surrounds the polypeptide exit tunnel on the outside of the subunit. This chain is Large ribosomal subunit protein uL24, found in Synechococcus sp. (strain RCC307).